A 252-amino-acid polypeptide reads, in one-letter code: 3-deoxy-manno-octulosonate cytidylyltransferase (252 aa).

This sequence belongs to the KdsB family.

The protein localises to the cytoplasm. It carries out the reaction 3-deoxy-alpha-D-manno-oct-2-ulosonate + CTP = CMP-3-deoxy-beta-D-manno-octulosonate + diphosphate. It functions in the pathway nucleotide-sugar biosynthesis; CMP-3-deoxy-D-manno-octulosonate biosynthesis; CMP-3-deoxy-D-manno-octulosonate from 3-deoxy-D-manno-octulosonate and CTP: step 1/1. Its pathway is bacterial outer membrane biogenesis; lipopolysaccharide biosynthesis. Activates KDO (a required 8-carbon sugar) for incorporation into bacterial lipopolysaccharide in Gram-negative bacteria. The chain is 3-deoxy-manno-octulosonate cytidylyltransferase from Nitratidesulfovibrio vulgaris (strain ATCC 29579 / DSM 644 / CCUG 34227 / NCIMB 8303 / VKM B-1760 / Hildenborough) (Desulfovibrio vulgaris).